A 226-amino-acid chain; its full sequence is Exopolysaccharide production protein ExoY (226 aa).

The helical transmembrane segment at V34–L54 threads the bilayer.

Belongs to the bacterial sugar transferase family.

Its subcellular location is the cell membrane. It participates in glycan metabolism; exopolysaccharide biosynthesis. Functionally, needed for the addition of the first sugar (galactose) to the isoprenoid carrier. May function as a sugar transferase. In Rhizobium meliloti (strain 1021) (Ensifer meliloti), this protein is Exopolysaccharide production protein ExoY (exoY).